The following is a 420-amino-acid chain: Exodeoxyribonuclease 7 large subunit (420 aa).

This sequence belongs to the XseA family. Heterooligomer composed of large and small subunits.

The protein localises to the cytoplasm. It catalyses the reaction Exonucleolytic cleavage in either 5'- to 3'- or 3'- to 5'-direction to yield nucleoside 5'-phosphates.. Functionally, bidirectionally degrades single-stranded DNA into large acid-insoluble oligonucleotides, which are then degraded further into small acid-soluble oligonucleotides. This is Exodeoxyribonuclease 7 large subunit from Helicobacter pylori (strain J99 / ATCC 700824) (Campylobacter pylori J99).